A 123-amino-acid polypeptide reads, in one-letter code: Ribonuclease P protein component 2 (123 aa).

This sequence belongs to the eukaryotic/archaeal RNase P protein component 2 family. Consists of a catalytic RNA component and at least 4 protein subunits.

It carries out the reaction Endonucleolytic cleavage of RNA, removing 5'-extranucleotides from tRNA precursor.. In terms of biological role, part of ribonuclease P, a protein complex that generates mature tRNA molecules by cleaving their 5'-ends. This is Ribonuclease P protein component 2 from Aeropyrum pernix (strain ATCC 700893 / DSM 11879 / JCM 9820 / NBRC 100138 / K1).